Consider the following 1162-residue polypeptide: MKINGNLNIDSPVDNKNVAIVRSRNQMFFKAFQVAPNIWIVPERYYGESLKINEDQKFDGGIYDSNFLSTNNEKDDFLQATIKLLQRINNNVVGAKLLSLISTAIPFPYENNTEDYRQTNYLSSKNNEHYYTANLVIFGPGSNIIKNNVIYYKKEYAESGMGTMLEIWFQPFLTHKYDEFYVDPALELIKCLIKSLYYLYGIKPNDNLNIPYRLRNEFNSLEYSELNMIDFLISGGIDYKLLNTNPYWFIDKYFIDTSKNFEKYKNDYEIKIKNNNYIANSIKLYLEQKFKINVKDIWELNLSYFSKEFQIMMPERYNNALNHYYRKEFYVIDYFKNYNINGFKNGQIKTKLPLSKYNKEIINKPELIVNLINQNNTVLMKSNIYGDGLKGTVDNFYSNYIIPYNLNYEHSINYFYLDNVNIEEIEKIPPINDEDIYPYRKNADTFIPVYNITKAKEINTTTPLPVNYLQAQMIDSNDINLSSDFLKVISSKGSLVYSFLNNTMDYLEFIKYDKPIDTDKKYYKWLKAIFRNYSLDITETQEISNQFGDTKIIPWIGRALNILNTNNSFVEEFKNLGPISLINKKENITIPKIKIDEIPSSMLNFSFKDLSENLFNIYCKNNFYLKKIYYNFLDQWWTQYYSQYFDLICMASKSVLAQEKLIKKLIQKQLRYLMENSNISSTNLILINLTTTNTLRDISNQSQIAINNIDKFFNNAAMCVFENNIYPKFTSFMEQCIKNINKSTKEFILKCTNINETEKSHLIMQNSFSNLDFDFLDIQNMKNLFNLYTELLIKEQTSPYELSLYAFQEQDNNVIGDTSGKNTLVEYPKDIGLVYGINNNAIHLTGANQNIKFTNDYFENGLTNNFSIYFWLRNLKQNTIKSKLIGSKEDNCGWEIYFENDGLVFNIIDSNGNEKNIYLSNISNKSWHYIVISINRLKDQLLIFIDNILVANEDIKEILNIYSSDIISLLSDNNNVYIEGLSVLNKTINSNEILTDYFSDLNNSYIRNFDEEILQYNRTYELFNYVFPEIAINKIEQNNNIYLSINNENNLNFKPLKFKLLNTNPNKQYVQKWDEVIFSVLDGTEKYLDISTTNNRIQLVDNKNNAQIFIINNDIFISNCLTLTYNNVNVYLSIKNQDYNWVICDLNHDIPKKSYLWILKNI.

Belongs to the botulism non-toxic nonhemagglutinin family. Forms a highly interlocked heterodimer with botulinum neurotoxin type E at pH 6.0 but not at pH 7.5.

Assembles with botulinum neurotoxin type E (BoNT/E) and protects it against pH-mediated inactivation or protease activity at pH 2.6 (the pH of the animal gastrointestinal tract) but not at pH 6.0. The non-toxic component is necessary to maintain toxicity. In Clostridium botulinum, this protein is Non-toxic nonhemagglutinin type E (ent-120).